We begin with the raw amino-acid sequence, 623 residues long: Xaa-Pro aminopeptidase 1 (623 aa).

A peptide is bound at residue arginine 77. Residue lysine 304 is modified to N6-acetyllysine. Residue histidine 395 coordinates a peptide. 3 residues coordinate Mn(2+): aspartate 415, aspartate 426, and histidine 489. A peptide-binding residues include histidine 489, histidine 498, and glutamate 523. Mn(2+) is bound by residues glutamate 523 and glutamate 537.

Belongs to the peptidase M24B family. Homodimer. Mn(2+) serves as cofactor. Expressed in all tissues tested, including pancreas, heart, muscle, kidney, liver, lung and brain. Highest levels in pancreas.

It is found in the cytoplasm. The protein resides in the cytosol. It carries out the reaction Release of any N-terminal amino acid, including proline, that is linked to proline, even from a dipeptide or tripeptide.. Inhibited by apstatin and the metal ion chelators EDTA and 1,10-phenanthroline. Partially inhibited by dithiothreitol. Not inhibited by enalaprilat or amastatin. Specifically inhibited by the pseudodipeptide CQ31. Inhibition by CQ31 indirectly activates the CARD8 inflammasome: dipeptide accumulation following PEPD inactivation weaky inhibit dipeptidyl peptidases DDP8 and DPP9, relieving DPP8- and/or DPP9-mediated inhibition of CARD8. Functionally, metalloaminopeptidase that catalyzes the removal of a penultimate prolyl residue from the N-termini of peptides, such as Arg-Pro-Pro. Contributes to the degradation of bradykinin. This is Xaa-Pro aminopeptidase 1 from Homo sapiens (Human).